The sequence spans 55 residues: Large ribosomal subunit protein bL33 (55 aa).

This sequence belongs to the bacterial ribosomal protein bL33 family.

The protein is Large ribosomal subunit protein bL33 of Pseudarthrobacter chlorophenolicus (strain ATCC 700700 / DSM 12829 / CIP 107037 / JCM 12360 / KCTC 9906 / NCIMB 13794 / A6) (Arthrobacter chlorophenolicus).